We begin with the raw amino-acid sequence, 29 residues long: Protein 1.5 (29 aa).

This is Protein 1.5 from Escherichia phage T7 (Bacteriophage T7).